We begin with the raw amino-acid sequence, 219 residues long: Probable nicotinate-nucleotide adenylyltransferase (219 aa).

The protein belongs to the NadD family.

The catalysed reaction is nicotinate beta-D-ribonucleotide + ATP + H(+) = deamido-NAD(+) + diphosphate. It functions in the pathway cofactor biosynthesis; NAD(+) biosynthesis; deamido-NAD(+) from nicotinate D-ribonucleotide: step 1/1. Catalyzes the reversible adenylation of nicotinate mononucleotide (NaMN) to nicotinic acid adenine dinucleotide (NaAD). In Herminiimonas arsenicoxydans, this protein is Probable nicotinate-nucleotide adenylyltransferase.